The chain runs to 1452 residues: MAPEEGDQAMSHEDKAACSSLNTTSSTELFDGAPSSENERLRIRQAAVDAMHHGSPKIDPQIWTDVTSHLSGSTTIDARQRDIFFENLTVHGKGSSLQIQKTVLSALLYPIAYPVKRLMSIVGNKKPHNDRRTILHGFNGILNSGELLLVLGRPGSGCSTFLKSLCGYLEGLDLDPVSEIQYRGVPFRVMIEKYRGDLVYNQEADHHFPNLTVGQTLEFAAHARAPHNQVGNSSRDQYVKSVVKVVMDTFGLSHTYDTNVGNDFVPGVSGGERKRVRTDTIVGMNSIAETVLSRTSIAAWDNSTRGLDAATAVDFVRSLRTSAKLAGSCHAVAVYQASEGLYNTFDKVILLYEGREIYFGPRQGAVAYFETMGWKRPPQQVSADFLTAITNPGERQPQVGMENAVPRTPVEFESYWKNSPEHAELETSMRQYKMKTPLDSSEEIKLDEIKRLEQSNHARISSPYLLSVPMQIRLCIVRAWQRTRNDIPALIATAVAQTVVSLIIGSLFYNIPENTAGLGQRASVLFLAVLTNALISLLEITTLYSQRLIVEKQAAYAFVHPFTEAIAEVIVDFPIKLFRCLLSAIIVYFLANLRREASHFFIYIMFQLTAVMTMATIFRTLATVTRTIGQAMALAGVVIICIAVYTGFTVPQFDMPPWFGWIRWLNPIFYTFEGIVSNEFHGRHFECVEYIPSLSFEQGLSFTCSYVGSIAGERYVSGDAYIAGSYDYSYDHVWRNYGILVAFLVFFYVLYFWLTELIPGTTPAHEVLIFRHGGVLQRLVRGDLERGESIRLQEVKSLASEVHSSKAEQKNTFSWKGLSYDIPVKGGEKRLLDDVSGWVKPGSLTALMGVSGAGKTTLMNVLARRMTIGVVTGDMFVNGRELDASFARNIGYVQQQDLHVETCTIREALRFSAALRQPQSVSMEEKYNFVEEVIQLLGMQNFAEAVIGSPGDGLNMEQRKLLSIGVELAAKPQLLIFLDEPTSGLDSRSSWAICAFMRKLADHGQPVLATIHQPSAVLFEQFDRLLFLAKGGRTVYFGDIGKQARTVLEYLEDKGARHCGPTENPAEYMLEVIGGGTQGQSTSIDWVQAWKRSTEYNKLLGELDILASSPSNGVSADPYMVGEFAMPLLVQFYHVMKRDLQQYYRQPEYILAKFGAGVFCGVFIGFSFWKSDNSSQGFQNVLFSLFLLCTIFSTLVNQIMPKFLSRRTLYELRERPARTYSWKVFILCQILVELPWQTLLGICTWASFYFSVYGSGQSSQRQGLVLLFTVQFFIFASTFAQLVVAAVPSVVLGSMLATFTFLLCLLFNGTMQPPSALPRFWIFMNRVSPLTYYVGGISATALHGRPIHCSNRELRVFDPPQGQNCGQYLAEYLKTAQGTLSNPLSTDQCQYCPLRVADQYLAARDISWDDRWRNFGIFWVYIIFNVIGAVLLYYLFRVLPYIRRNRTQKSRN.

The disordered stretch occupies residues 1–38 (MAPEEGDQAMSHEDKAACSSLNTTSSTELFDGAPSSEN). The span at 19–28 (SSLNTTSSTE) shows a compositional bias: polar residues. Residues 116-378 (KRLMSIVGNK…FETMGWKRPP (263 aa)) enclose the ABC transporter 1 domain. Helical transmembrane passes span 487–507 (IPAL…IGSL), 524–544 (VLFL…TTLY), 569–589 (VIVD…IVYF), 598–618 (SHFF…ATIF), 631–651 (AMAL…FTVP), and 738–758 (GILV…TELI). One can recognise an ABC transporter 2 domain in the interval 813 to 1055 (FSWKGLSYDI…TVLEYLEDKG (243 aa)). Position 849-856 (849-856 (GVSGAGKT)) interacts with ATP. 7 helical membrane-spanning segments follow: residues 1149 to 1169 (YILA…FSFW), 1181 to 1201 (VLFS…QIMP), 1224 to 1244 (VFIL…GICT), 1264 to 1284 (LVLL…QLVV), 1287 to 1307 (VPSV…CLLF), 1322 to 1344 (IFMN…ALHG), and 1415 to 1435 (FGIF…LYYL).

It belongs to the ABC transporter superfamily. ABCG family. PDR (TC 3.A.1.205) subfamily.

The protein localises to the membrane. Its function is as follows. ABC-type transporter; part of the gene cluster that mediates the biosynthesis of the meroterpenoid compound andrastin A, a promising antitumoral compound. Is required for the production of andrastin A but does not have a significant role in its secretion. The sequence is that of ABC-type transporter adrC from Penicillium roqueforti.